Reading from the N-terminus, the 100-residue chain is Urease subunit gamma (100 aa).

The protein belongs to the urease gamma subunit family. As to quaternary structure, heterotrimer of UreA (gamma), UreB (beta) and UreC (alpha) subunits. Three heterotrimers associate to form the active enzyme.

Its subcellular location is the cytoplasm. The catalysed reaction is urea + 2 H2O + H(+) = hydrogencarbonate + 2 NH4(+). It participates in nitrogen metabolism; urea degradation; CO(2) and NH(3) from urea (urease route): step 1/1. This Mycobacterium ulcerans (strain Agy99) protein is Urease subunit gamma.